We begin with the raw amino-acid sequence, 369 residues long: Methylthioribose-1-phosphate isomerase (369 aa).

Position 1 is an N-acetylmethionine (M1). R158 is subject to Omega-N-methylarginine. D248 functions as the Proton donor in the catalytic mechanism. Residue S366 is modified to Phosphoserine.

The protein belongs to the eIF-2B alpha/beta/delta subunits family. MtnA subfamily.

It localises to the cytoplasm. The protein resides in the nucleus. The catalysed reaction is 5-(methylsulfanyl)-alpha-D-ribose 1-phosphate = 5-(methylsulfanyl)-D-ribulose 1-phosphate. The protein operates within amino-acid biosynthesis; L-methionine biosynthesis via salvage pathway; L-methionine from S-methyl-5-thio-alpha-D-ribose 1-phosphate: step 1/6. Catalyzes the interconversion of methylthioribose-1-phosphate (MTR-1-P) into methylthioribulose-1-phosphate (MTRu-1-P). In Mus musculus (Mouse), this protein is Methylthioribose-1-phosphate isomerase (Mri1).